Consider the following 511-residue polypeptide: Cytochrome P450 4B1 (511 aa).

E315 provides a ligand contact to heme. S436 is subject to Phosphoserine. C453 contacts heme.

Belongs to the cytochrome P450 family. The cofactor is heme. As to expression, detected in the liver and lung (at protein level).

It is found in the endoplasmic reticulum membrane. Its subcellular location is the microsome membrane. It carries out the reaction an organic molecule + reduced [NADPH--hemoprotein reductase] + O2 = an alcohol + oxidized [NADPH--hemoprotein reductase] + H2O + H(+). Its function is as follows. Cytochromes P450 are a group of heme-thiolate monooxygenases. In liver microsomes, this enzyme is involved in an NADPH-dependent electron transport pathway. It oxidizes a variety of structurally unrelated compounds, including steroids, fatty acids, and xenobiotics. The protein is Cytochrome P450 4B1 (CYP4B1) of Homo sapiens (Human).